A 220-amino-acid polypeptide reads, in one-letter code: Protein-L-isoaspartate O-methyltransferase (220 aa).

Ser69 is a catalytic residue.

It belongs to the methyltransferase superfamily. L-isoaspartyl/D-aspartyl protein methyltransferase family.

It is found in the cytoplasm. It catalyses the reaction [protein]-L-isoaspartate + S-adenosyl-L-methionine = [protein]-L-isoaspartate alpha-methyl ester + S-adenosyl-L-homocysteine. Catalyzes the methyl esterification of L-isoaspartyl residues in peptides and proteins that result from spontaneous decomposition of normal L-aspartyl and L-asparaginyl residues. It plays a role in the repair and/or degradation of damaged proteins. The polypeptide is Protein-L-isoaspartate O-methyltransferase (Alcanivorax borkumensis (strain ATCC 700651 / DSM 11573 / NCIMB 13689 / SK2)).